The primary structure comprises 358 residues: Alanine racemase (358 aa).

Catalysis depends on Lys-34, which acts as the Proton acceptor; specific for D-alanine. Lys-34 carries the N6-(pyridoxal phosphate)lysine modification. Arg-129 serves as a coordination point for substrate. The active-site Proton acceptor; specific for L-alanine is the Tyr-254. Met-302 provides a ligand contact to substrate.

The protein belongs to the alanine racemase family. It depends on pyridoxal 5'-phosphate as a cofactor.

The enzyme catalyses L-alanine = D-alanine. The protein operates within amino-acid biosynthesis; D-alanine biosynthesis; D-alanine from L-alanine: step 1/1. Functionally, catalyzes the interconversion of L-alanine and D-alanine. May also act on other amino acids. This is Alanine racemase (alr) from Vibrio vulnificus (strain CMCP6).